A 546-amino-acid polypeptide reads, in one-letter code: Fusion glycoprotein F0 (546 aa).

An N-terminal signal peptide occupies residues 1–19; sequence MRIPLAALIAMTIPCLATG. Residues 20-491 are Extracellular-facing; it reads QIHWGNLSKI…NIKGVSVTNT (472 aa). Asn25, Asn57, and Asn63 each carry an N-linked (GlcNAc...) asparagine; by host glycan. Positions 109–133 are fusion peptide; sequence FAGVVLAGAALGVATAAQITAGIAL. Residues 134-162 are a coiled coil; sequence HQSMMNSQAIESLKASLVTTNQAIEEIRQ. 3 disulfide bridges follow: Cys354-Cys362, Cys386-Cys391, and Cys393-Cys416. Residues 458–483 are a coiled coil; the sequence is DLGNAVTKLERAKDLLDSSDLILKNI. The chain crosses the membrane as a helical span at residues 492–512; sequence GYILIGVGLIAVVGIIIVTCC. Residues 513 to 546 lie on the Cytoplasmic side of the membrane; it reads CKKSSSDSRASTVVLNPGLKPDLTGTSKSYIRSL.

It belongs to the paramyxoviruses fusion glycoprotein family. As to quaternary structure, homotrimer of disulfide-linked F1-F2. The inactive precursor F0 is glycosylated and proteolytically cleaved into F1 and F2 to be functionally active. The cleavage is mediated by cellular proteases during the transport and maturation of the polypeptide.

It localises to the virion membrane. It is found in the host cell membrane. Functionally, class I viral fusion protein. Under the current model, the protein has at least 3 conformational states: pre-fusion native state, pre-hairpin intermediate state, and post-fusion hairpin state. During viral and plasma cell membrane fusion, the heptad repeat (HR) regions assume a trimer-of-hairpins structure, positioning the fusion peptide in close proximity to the C-terminal region of the ectodomain. The formation of this structure appears to drive apposition and subsequent fusion of viral and plasma cell membranes. Directs fusion of viral and cellular membranes leading to delivery of the nucleocapsid into the cytoplasm. This fusion is pH independent and occurs directly at the outer cell membrane. The trimer of F1-F2 (F protein) probably interacts with HN at the virion surface. Upon HN binding to its cellular receptor, the hydrophobic fusion peptide is unmasked and interacts with the cellular membrane, inducing the fusion between cell and virion membranes. Later in infection, F proteins expressed at the plasma membrane of infected cells could mediate fusion with adjacent cells to form syncytia, a cytopathic effect that could lead to tissue necrosis. In Bos indicus (Zebu), this protein is Fusion glycoprotein F0 (F).